The primary structure comprises 323 residues: tRNA U34 carboxymethyltransferase (323 aa).

Carboxy-S-adenosyl-L-methionine is bound by residues Lys-91, Trp-105, Lys-110, Gly-130, 152-154, 181-182, Met-196, Tyr-200, and Arg-315; these read DPT and IE.

The protein belongs to the class I-like SAM-binding methyltransferase superfamily. CmoB family. As to quaternary structure, homotetramer.

It catalyses the reaction carboxy-S-adenosyl-L-methionine + 5-hydroxyuridine(34) in tRNA = 5-carboxymethoxyuridine(34) in tRNA + S-adenosyl-L-homocysteine + H(+). Functionally, catalyzes carboxymethyl transfer from carboxy-S-adenosyl-L-methionine (Cx-SAM) to 5-hydroxyuridine (ho5U) to form 5-carboxymethoxyuridine (cmo5U) at position 34 in tRNAs. This is tRNA U34 carboxymethyltransferase from Escherichia coli O81 (strain ED1a).